A 136-amino-acid polypeptide reads, in one-letter code: Large ribosomal subunit protein bL17 (136 aa).

The protein belongs to the bacterial ribosomal protein bL17 family. Part of the 50S ribosomal subunit. Contacts protein L32.

The sequence is that of Large ribosomal subunit protein bL17 from Rhodopseudomonas palustris (strain BisA53).